Here is a 183-residue protein sequence, read N- to C-terminus: Nucleoplasmin-like protein NO29 (183 aa).

Residues 126 to 166 (SDDEDLSGSEEEMEDEEEEEDDDDDDDDDDDDDDDDDEEEI) show a composition bias toward acidic residues. Residues 126–183 (SDDEDLSGSEEEMEDEEEEEDDDDDDDDDDDDDDDDDEEEITPIKPAKKPLKTLSRTF) form a disordered region.

Belongs to the nucleoplasmin family.

It is found in the nucleus. It localises to the nucleolus. This is Nucleoplasmin-like protein NO29 from Xenopus laevis (African clawed frog).